Consider the following 156-residue polypeptide: MPRRREVPKREILPDPKFGNVDVAKFVNVLMLSGKKSVAENIIYGAFEHIQTKSGKDPLEVFTAAIANCKPLVEVKSRRVGGANYQVPVEVRPVRRMALSMRWLREAANKRSEKSMPQRLAGELLEAAESRGGAMKKRDEVHRMAEANKAFSHFRF.

This sequence belongs to the universal ribosomal protein uS7 family. Part of the 30S ribosomal subunit. Contacts proteins S9 and S11.

One of the primary rRNA binding proteins, it binds directly to 16S rRNA where it nucleates assembly of the head domain of the 30S subunit. Is located at the subunit interface close to the decoding center, probably blocks exit of the E-site tRNA. This is Small ribosomal subunit protein uS7 from Janthinobacterium sp. (strain Marseille) (Minibacterium massiliensis).